Here is a 315-residue protein sequence, read N- to C-terminus: Putative purine nucleoside phosphorylase (315 aa).

Phosphate contacts are provided by residues Ser-49, His-81, 103–105 (RYH), and Ala-135. Glu-220 provides a ligand contact to a purine D-ribonucleoside. Ser-239 contacts phosphate. Residue Asn-262 participates in a purine D-ribonucleoside binding.

Belongs to the PNP/MTAP phosphorylase family.

Its subcellular location is the cytoplasm. The protein localises to the nucleus. It carries out the reaction a purine D-ribonucleoside + phosphate = a purine nucleobase + alpha-D-ribose 1-phosphate. It functions in the pathway purine metabolism; purine nucleoside salvage. Functionally, the purine nucleoside phosphorylases catalyze the phosphorolytic breakdown of the N-glycosidic bond in the beta-(deoxy)ribonucleoside molecules, with the formation of the corresponding free purine bases and pentose-1-phosphate. Cleaves guanosine and inosine. The sequence is that of Putative purine nucleoside phosphorylase from Schizosaccharomyces pombe (strain 972 / ATCC 24843) (Fission yeast).